Reading from the N-terminus, the 446-residue chain is Cyclin-T1-1 (446 aa).

It belongs to the cyclin family. Cyclin T subfamily.

The protein is Cyclin-T1-1 (CYCT1-1) of Oryza sativa subsp. japonica (Rice).